Here is a 982-residue protein sequence, read N- to C-terminus: Coatomer subunit beta (982 aa).

4 HEAT repeats span residues 16 to 53 (SGAPVNSKELKSALEKGDMKARASALEALIRMHLNGEP), 130 to 167 (ELVEPLVSSVVQNLTHRVTYVRRNAVLAVHRIFKRFPE), 241 to 278 (YDKGRYVTVLFSILQSNNPAVRYQCASTLLSISTSPTA), and 317 to 352 (LQDSLLDILSVLANGTMEIRKRIVTLGVELVSNQNS).

As to quaternary structure, oligomeric complex that consists of at least the alpha, beta, beta', gamma, delta, epsilon and zeta subunits.

Its subcellular location is the cytoplasm. It localises to the golgi apparatus membrane. It is found in the cytoplasmic vesicle. The protein localises to the COPI-coated vesicle membrane. In terms of biological role, the coatomer is a cytosolic protein complex that binds to dilysine motifs and reversibly associates with Golgi non-clathrin-coated vesicles, which further mediate biosynthetic protein transport from the ER, via the Golgi up to the trans Golgi network. Coatomer complex is required for budding from Golgi membranes, and is essential for the retrograde Golgi-to-ER transport of dilysine-tagged proteins. In Trypanosoma brucei brucei, this protein is Coatomer subunit beta.